The chain runs to 491 residues: Ketol-acid reductoisomerase (NADP(+)) (491 aa).

The region spanning 15 to 208 (AQLGKCRFMG…GGHRAGVLES (194 aa)) is the KARI N-terminal Rossmann domain. NADP(+)-binding positions include 45–48 (CGAQ), Arg-68, Arg-76, Ser-78, and 108–110 (DKQ). His-132 is an active-site residue. Gly-158 serves as a coordination point for NADP(+). 2 KARI C-terminal knotted domains span residues 209 to 344 (SFVA…TAPQ) and 345 to 484 (YEGK…MTDM). The Mg(2+) site is built by Asp-217, Glu-221, Glu-389, and Glu-393. Ser-414 lines the substrate pocket.

Belongs to the ketol-acid reductoisomerase family. The cofactor is Mg(2+).

It catalyses the reaction (2R)-2,3-dihydroxy-3-methylbutanoate + NADP(+) = (2S)-2-acetolactate + NADPH + H(+). The catalysed reaction is (2R,3R)-2,3-dihydroxy-3-methylpentanoate + NADP(+) = (S)-2-ethyl-2-hydroxy-3-oxobutanoate + NADPH + H(+). Its pathway is amino-acid biosynthesis; L-isoleucine biosynthesis; L-isoleucine from 2-oxobutanoate: step 2/4. It functions in the pathway amino-acid biosynthesis; L-valine biosynthesis; L-valine from pyruvate: step 2/4. Its function is as follows. Involved in the biosynthesis of branched-chain amino acids (BCAA). Catalyzes an alkyl-migration followed by a ketol-acid reduction of (S)-2-acetolactate (S2AL) to yield (R)-2,3-dihydroxy-isovalerate. In the isomerase reaction, S2AL is rearranged via a Mg-dependent methyl migration to produce 3-hydroxy-3-methyl-2-ketobutyrate (HMKB). In the reductase reaction, this 2-ketoacid undergoes a metal-dependent reduction by NADPH to yield (R)-2,3-dihydroxy-isovalerate. This Shigella flexneri protein is Ketol-acid reductoisomerase (NADP(+)).